The chain runs to 416 residues: Solute carrier family 25 member 46 (416 aa).

Residues 1-13 (MQPRRPDRFDGLE) are compositionally biased toward basic and acidic residues. Residues 1-91 (MQPRRPDRFD…GEESSSSSSG (91 aa)) are disordered. A compositionally biased stretch (polar residues) spans 37 to 49 (SFSSSGDLSQHWV). The span at 82 to 91 (GEESSSSSSG) shows a compositional bias: low complexity. The stretch at 94–185 (HLNRFAGFGI…GMLSEFTHLP (92 aa)) is one Solcar 1 repeat. Helical transmembrane passes span 101–121 (FGIG…CIVL), 161–181 (MGST…LSEF), 197–217 (IGGH…FYSA), 256–276 (LLPL…HYII), 312–332 (FPEL…LYPL), and 381–401 (LGFY…AIVL). The stretch at 309–414 (EDYFPELIAN…KIIYSSVVQT (106 aa)) is one Solcar 2 repeat.

The protein belongs to the mitochondrial carrier (TC 2.A.29) family.

It localises to the mitochondrion outer membrane. May play a role in mitochondrial dynamics by controlling mitochondrial membrane fission. In Xenopus tropicalis (Western clawed frog), this protein is Solute carrier family 25 member 46 (slc25a46).